A 72-amino-acid polypeptide reads, in one-letter code: uncharacterized protein (72 aa).

The N-terminal stretch at 1 to 22 is a signal peptide; it reads MQSNFIFATLLVLLSLLTFTYA. Residues 23–28 lie on the Extracellular side of the membrane; that stretch reads SGSSSM. A helical membrane pass occupies residues 29–49; sequence TSSSMPMFGGAIVAAFAFAIF. The Cytoplasmic segment spans residues 50-72; the sequence is SRLAQNFAPRAIFSLLPYHSVSC.

The protein resides in the membrane. This is an uncharacterized protein from Dictyostelium discoideum (Social amoeba).